Reading from the N-terminus, the 424-residue chain is ATP-citrate synthase alpha chain protein 3 (424 aa).

The citrate site is built by asparagine 343, threonine 345, and arginine 376.

It belongs to the succinate/malate CoA ligase beta subunit family. In terms of assembly, heterooctamer of 4 alpha and 4 beta chains.

It is found in the cytoplasm. The protein localises to the cytosol. It carries out the reaction oxaloacetate + acetyl-CoA + ADP + phosphate = citrate + ATP + CoA. ATP citrate-lyase is the primary enzyme responsible for the synthesis of cytosolic acetyl-CoA, used for the elongation of fatty acids and biosynthesis of isoprenoids, flavonoids and malonated derivatives. May supply substrate to the cytosolic acetyl-CoA carboxylase, which generates the malonyl-CoA used for the synthesis of a multitude of compounds, including very long chain fatty acids and flavonoids. Required for normal growth and development and elongation of C18 fatty acids to C20 to C24 fatty acids in seeds. In contrast to all known animal ACL enzymes having a homomeric structure, plant ACLs are composed of alpha and beta chains. The protein is ATP-citrate synthase alpha chain protein 3 (ACLA-3) of Arabidopsis thaliana (Mouse-ear cress).